A 565-amino-acid chain; its full sequence is Glucose starvation modulator protein 1 (565 aa).

The zn(2)-C6 fungal-type DNA-binding region spans Cys-20 to Cys-48. 2 disordered regions span residues Gly-63–Asn-106 and Gln-250–Ser-269. Over residues Ser-82–Ser-93 the composition is skewed to polar residues. The segment covering Ser-252 to Ser-269 has biased composition (low complexity).

This sequence belongs to the ERT1/acuK family.

It localises to the nucleus. Transcription factor which regulates nonfermentable carbon utilization. In Candida dubliniensis (strain CD36 / ATCC MYA-646 / CBS 7987 / NCPF 3949 / NRRL Y-17841) (Yeast), this protein is Glucose starvation modulator protein 1 (GSM1).